A 387-amino-acid chain; its full sequence is EARP and GARP complex-interacting protein 1 (387 aa).

At M1 the chain carries N-acetylmethionine. WD repeat units lie at residues D4–F48, I55–M101, E124–L164, V172–T214, Q219–T258, and E263–M302. The tract at residues F310 to L335 is disordered. A Phosphoserine modification is found at S320. Basic and acidic residues predominate over residues Q322–L335. The stretch at N338 to R379 is one WD 7 repeat.

This sequence belongs to the WD repeat EIPR1 family. In terms of assembly, interacts with two multisubunit tethering complexes: EARP composed of VPS50, VPS51, VPS52 and VPS53 subunits and GARP complex composed of VPS51, VPS52, VPS53 and VPS54 subunits. Interacts with SNAP29.

It localises to the golgi apparatus. Its subcellular location is the trans-Golgi network. Acts as a component of endosomal retrieval machinery that is involved in protein transport from early endosomes to either recycling endosomes or the trans-Golgi network. Mediates the recruitment of Golgi-associated retrograde protein (GARP) complex to the trans-Golgi network and controls early endosome-to-Golgi transport of internalized protein. Promotes the recycling of internalized transferrin receptor (TFRC) to the plasma membrane through interaction with endosome-associated recycling protein (EARP) complex. Controls proper insulin distribution and secretion, and retention of cargo in mature dense core vesicles. Required for the stability of the endosome-associated retrograde protein (EARP) complex subunits and for proper localization and association of EARP with membranes. In Homo sapiens (Human), this protein is EARP and GARP complex-interacting protein 1.